Here is a 332-residue protein sequence, read N- to C-terminus: Cytoplasmic phosphatidylinositol transfer protein 1 (332 aa).

Phosphoserine occurs at positions 119, 122, 270, and 274. A compositionally biased stretch (low complexity) spans 272–281; that stretch reads PSSAPSTPLS. Residues 272-332 are disordered; sequence PSSAPSTPLS…SEKPCRPKSE (61 aa). Thr-278 bears the Phosphothreonine mark.

This sequence belongs to the PtdIns transfer protein family. PI transfer class IIB subfamily. As to expression, widely expressed in brain, with expression in the gray matters of pre- and postnatal brains. Weakly expressed in brain and is rather confined to the embryonic stage.

The protein localises to the cytoplasm. It localises to the nucleus. It catalyses the reaction a 1,2-diacyl-sn-glycero-3-phospho-(1D-myo-inositol)(in) = a 1,2-diacyl-sn-glycero-3-phospho-(1D-myo-inositol)(out). It carries out the reaction a 1,2-diacyl-sn-glycero-3-phosphate(in) = a 1,2-diacyl-sn-glycero-3-phosphate(out). Functionally, catalyzes the transfer of phosphatidylinositol (PI) and phosphatidic acid (PA) between membranes. Binds PA derived from the phospholipase D signaling pathway and among the cellular PA species, preferably binds to the C16:0/16:1 and C16:1/18:1 PA species. In terms of biological role, specifically binds to phosphatidylinositol but not to other phospholipids and may play a role in the phosphoinositide-mediated signaling in the neural development. This chain is Cytoplasmic phosphatidylinositol transfer protein 1 (Pitpnc1), found in Mus musculus (Mouse).